Here is a 149-residue protein sequence, read N- to C-terminus: Large ribosomal subunit protein bL9 (149 aa).

It belongs to the bacterial ribosomal protein bL9 family.

In terms of biological role, binds to the 23S rRNA. This is Large ribosomal subunit protein bL9 from Leptospira borgpetersenii serovar Hardjo-bovis (strain JB197).